The sequence spans 531 residues: DNA damage-binding protein cmr1 (531 aa).

Disordered regions lie at residues 37-83 (GIFP…RGIA) and 218-264 (DASQ…MHIH). Basic residues predominate over residues 53–64 (KPKKKPAPKKIK). The WD 1 repeat unit spans residues 186–227 (VTPERIYTMTFHPSEAKPLIFAGDKMGNLGVLDASQERPVSS). Residues 233-245 (GDEEEQEDDDDPD) show a composition bias toward acidic residues. WD repeat units follow at residues 253–293 (PHTR…SVET), 300–340 (SDDV…RTAV), 345–385 (LSEK…HDDP), 392–431 (LSRL…ASWE), 454–497 (GRWV…LAQL), and 500–531 (DGIT…CLWM).

The protein belongs to the WD repeat DDB2/WDR76 family.

In terms of biological role, DNA-binding protein that binds to both single- and double-stranded DNA. Binds preferentially to UV-damaged DNA. May be involved in DNA-metabolic processes. The sequence is that of DNA damage-binding protein cmr1 from Aspergillus clavatus (strain ATCC 1007 / CBS 513.65 / DSM 816 / NCTC 3887 / NRRL 1 / QM 1276 / 107).